Consider the following 318-residue polypeptide: Mitochondrial fission regulator 1 (318 aa).

Disordered regions lie at residues 101–121 (RPLRRQRSLPSLHQVEPAQQS) and 154–193 (QEQSAQSTAPAPGGPPVPPPMVPVPPPPPPPPPCPTPSMQ). Positions 124 to 157 (VINDEAIQKISVLETELAKLRAQIAQIVQAQEQS) form a coiled coil. Residues 154-164 (QEQSAQSTAPA) show a composition bias toward low complexity. Positions 165–189 (PGGPPVPPPMVPVPPPPPPPPPCPT) are enriched in pro residues. Residues 168-296 (PPVPPPMVPV…TFTFTAFENK (129 aa)) are necessary and sufficient to promote mitochondrial fission.

It belongs to the MTFR1 family.

Its subcellular location is the mitochondrion. May play a role in mitochondrial aerobic respiration. May also regulate mitochondrial organization and fission. The chain is Mitochondrial fission regulator 1 (mtfr1) from Danio rerio (Zebrafish).